The chain runs to 172 residues: MDRAEKREFVAWLNGAFKESGSVVVAHYTGLTVAQMSDLRSKMRDAGGSVKVAKNRLAKIALQGTESEGIADLFTGQTVVAYANDPITAPKVAVEFAKANDKLVILGGAMGATTLNADGVKSLASLPSLDELRAKLVGMIQTPAQRLAVLTSAPASQIARVIGAHARKNEAA.

It belongs to the universal ribosomal protein uL10 family. As to quaternary structure, part of the ribosomal stalk of the 50S ribosomal subunit. The N-terminus interacts with L11 and the large rRNA to form the base of the stalk. The C-terminus forms an elongated spine to which L12 dimers bind in a sequential fashion forming a multimeric L10(L12)X complex.

In terms of biological role, forms part of the ribosomal stalk, playing a central role in the interaction of the ribosome with GTP-bound translation factors. The protein is Large ribosomal subunit protein uL10 of Brucella suis biovar 1 (strain 1330).